We begin with the raw amino-acid sequence, 637 residues long: Zinc-transporting ATPase (637 aa).

The next 4 helical transmembrane spans lie at 43–63 (GWLL…AFVI), 89–109 (IFAA…ILIF), 258–278 (GVLI…GWSW), and 286–306 (MVFM…PAAL). The active-site 4-aspartylphosphate intermediate is the aspartate 337. Mg(2+)-binding residues include aspartate 535 and aspartate 539. Residues 599 to 619 (VICLLICANFLQAMELPFGVI) traverse the membrane as a helical segment.

The protein belongs to the cation transport ATPase (P-type) (TC 3.A.3) family. Type IB subfamily.

It localises to the cell membrane. The enzyme catalyses Zn(2+)(out) + ATP(in) + H2O(in) = Zn(2+)(in) + ADP(in) + phosphate(in) + H(+)(in). In terms of biological role, couples the hydrolysis of ATP with the transport of zinc into the cell. Plays an important role in protecting cells against oxidative stress. ZosA-mediated zinc transport is required for post-transcriptional control of comK and competence development. This Bacillus subtilis (strain 168) protein is Zinc-transporting ATPase (zosA).